A 506-amino-acid chain; its full sequence is H/ACA ribonucleoprotein complex subunit DKC1 (506 aa).

The tract at residues 1 to 26 is disordered; that stretch reads MADTESKKEKKRKSKKISDEEVGDIQ. The active-site Nucleophile is aspartate 120. One can recognise a PUA domain in the interval 291 to 366; it reads HKRIVMKDSA…VVAKIKRVIM (76 aa). Disordered stretches follow at residues 391–410 and 419–506; these read GLLD…WKEG and VKKG…ADSD. Residues 421–434 show a composition bias toward basic and acidic residues; sequence KGGEASAKRKRDES. Over residues 457 to 466 the composition is skewed to basic residues; that stretch reads EKKKKKKEKK.

The protein belongs to the pseudouridine synthase TruB family. As to quaternary structure, part of the H/ACA small nucleolar ribonucleoprotein (H/ACA snoRNP) complex. The complex binds a box H/ACA small nucleolar RNA (snoRNA), which may target the specific site of modification within the RNA substrate.

It localises to the nucleus. Its subcellular location is the nucleolus. The protein localises to the cajal body. The catalysed reaction is uridine in 5S rRNA = pseudouridine in 5S rRNA. In terms of biological role, catalytic subunit of H/ACA small nucleolar ribonucleoprotein (H/ACA snoRNP) complex, which catalyzes pseudouridylation of rRNA. This involves the isomerization of uridine such that the ribose is subsequently attached to C5, instead of the normal N1. Pseudouridine ('psi') residues may serve to stabilize the conformation of rRNAs. Required for ribosome biogenesis and telomere maintenance. The protein is H/ACA ribonucleoprotein complex subunit DKC1 of Danio rerio (Zebrafish).